The primary structure comprises 209 residues: Large ribosomal subunit protein uL3 (209 aa).

It belongs to the universal ribosomal protein uL3 family. As to quaternary structure, part of the 50S ribosomal subunit. Forms a cluster with proteins L14 and L19.

One of the primary rRNA binding proteins, it binds directly near the 3'-end of the 23S rRNA, where it nucleates assembly of the 50S subunit. The polypeptide is Large ribosomal subunit protein uL3 (Nitratidesulfovibrio vulgaris (strain ATCC 29579 / DSM 644 / CCUG 34227 / NCIMB 8303 / VKM B-1760 / Hildenborough) (Desulfovibrio vulgaris)).